A 705-amino-acid chain; its full sequence is Zinc finger protein 770 (705 aa).

Residue K16 forms a Glycyl lysine isopeptide (Lys-Gly) (interchain with G-Cter in SUMO2) linkage. 3 consecutive C2H2-type zinc fingers follow at residues 31-53, 59-81, and 85-107; these read YICN…YLIH, FECD…QLTH, and FSCN…QQLH. Glycyl lysine isopeptide (Lys-Gly) (interchain with G-Cter in SUMO2) cross-links involve residues K116, K124, and K149. 3 consecutive C2H2-type zinc fingers follow at residues 164-186, 192-214, and 220-242; these read HACT…SLIH, FKCV…QLTH, and FQCC…KQIH. A Glycyl lysine isopeptide (Lys-Gly) (interchain with G-Cter in SUMO2) cross-link involves residue K266. The segment at 298–322 adopts a C2H2-type 7; degenerate zinc-finger fold; the sequence is FQCSECEECFESEQILNGHKCLPAR. 4 consecutive C2H2-type zinc fingers follow at residues 485–507, 513–535, 640–662, and 668–690; these read CPCD…YLIH, FDCN…KLTH, YQCS…YLIH, and FECS…QLTH. A Glycyl lysine isopeptide (Lys-Gly) (interchain with G-Cter in SUMO2) cross-link involves residue K698.

It belongs to the krueppel C2H2-type zinc-finger protein family.

It localises to the nucleus. In terms of biological role, may be involved in transcriptional regulation. In Mus musculus (Mouse), this protein is Zinc finger protein 770 (Znf770).